Here is a 184-residue protein sequence, read N- to C-terminus: Putative manganese efflux pump MntP (184 aa).

6 helical membrane-spanning segments follow: residues 5–25, 38–58, 67–87, 107–127, 133–153, and 164–184; these read LISI…VSLT, ILYY…IGYI, VSTV…LNMI, LTLL…TFAL, LLPC…GIFI, and KFEI…LLGY.

Belongs to the MntP (TC 9.B.29) family.

It is found in the cell membrane. In terms of biological role, probably functions as a manganese efflux pump. The chain is Putative manganese efflux pump MntP from Methanobrevibacter smithii (strain ATCC 35061 / DSM 861 / OCM 144 / PS).